A 201-amino-acid polypeptide reads, in one-letter code: Retinol-binding protein 4 (201 aa).

Positions 1–18 (MKWVWALLLLAALGSGRA) are cleaved as a signal peptide. 3 disulfides stabilise this stretch: cysteine 22-cysteine 178, cysteine 88-cysteine 192, and cysteine 138-cysteine 147. Glutamine 116 lines the substrate pocket. Position 139 is an omega-N-methylarginine (arginine 139).

This sequence belongs to the calycin superfamily. Lipocalin family. Interacts with TTR. Interaction with TTR prevents its loss by filtration through the kidney glomeruli. Interacts with STRA6. Detected in blood plasma and in urine (at protein level).

It localises to the secreted. Retinol-binding protein that mediates retinol transport in blood plasma. Delivers retinol from the liver stores to the peripheral tissues. Transfers the bound all-trans retinol to STRA6, that then facilitates retinol transport across the cell membrane. This chain is Retinol-binding protein 4 (RBP4), found in Homo sapiens (Human).